The chain runs to 314 residues: Probable tRNA pseudouridine synthase B (314 aa).

Residues 1-10 (MATRGRHRSR) show a composition bias toward basic residues. Positions 1–30 (MATRGRHRSRTSGTSSEPMTLRAPPDERDL) are disordered. The active-site Nucleophile is D72. The PUA domain occupies 237–314 (LPRVTIAPSA…LVVELDRMLV (78 aa)).

The protein belongs to the pseudouridine synthase TruB family. Type 2 subfamily.

It catalyses the reaction uridine(55) in tRNA = pseudouridine(55) in tRNA. Its function is as follows. Could be responsible for synthesis of pseudouridine from uracil-55 in the psi GC loop of transfer RNAs. This chain is Probable tRNA pseudouridine synthase B, found in Haloarcula marismortui (strain ATCC 43049 / DSM 3752 / JCM 8966 / VKM B-1809) (Halobacterium marismortui).